The following is a 303-amino-acid chain: Protease HtpX homolog (303 aa).

Helical transmembrane passes span 4 to 24 (VVLF…TARI) and 38 to 58 (MGML…ISLL). Position 144 (His-144) interacts with Zn(2+). Glu-145 is an active-site residue. His-148 contacts Zn(2+). 2 consecutive transmembrane segments (helical) span residues 152–172 (GDMV…IFLS) and 199–219 (ISSI…VMYF). Glu-224 is a Zn(2+) binding site.

Belongs to the peptidase M48B family. Requires Zn(2+) as cofactor.

The protein localises to the cell inner membrane. The chain is Protease HtpX homolog from Chlorobium phaeobacteroides (strain BS1).